The primary structure comprises 213 residues: 3-isopropylmalate dehydratase small subunit (213 aa).

Belongs to the LeuD family. LeuD type 1 subfamily. As to quaternary structure, heterodimer of LeuC and LeuD.

The enzyme catalyses (2R,3S)-3-isopropylmalate = (2S)-2-isopropylmalate. The protein operates within amino-acid biosynthesis; L-leucine biosynthesis; L-leucine from 3-methyl-2-oxobutanoate: step 2/4. Catalyzes the isomerization between 2-isopropylmalate and 3-isopropylmalate, via the formation of 2-isopropylmaleate. This is 3-isopropylmalate dehydratase small subunit from Magnetococcus marinus (strain ATCC BAA-1437 / JCM 17883 / MC-1).